A 94-amino-acid polypeptide reads, in one-letter code: Small ribosomal subunit protein uS19 (94 aa).

The disordered stretch occupies residues 73–94 (EFSPTRRFGGHADKKSKKGQVK).

This sequence belongs to the universal ribosomal protein uS19 family.

Its function is as follows. Protein S19 forms a complex with S13 that binds strongly to the 16S ribosomal RNA. This Kosmotoga olearia (strain ATCC BAA-1733 / DSM 21960 / TBF 19.5.1) protein is Small ribosomal subunit protein uS19.